Here is a 1035-residue protein sequence, read N- to C-terminus: Eukaryotic translation initiation factor 3 subunit A (1035 aa).

Positions 92 to 121 (LKKFIELAEKKVTEAQAKADEIQSSLESAA) form a coiled coil. A PCI domain is found at 339–523 (MTKAASFVLL…GVLTFDTDVF (185 aa)). Residues 606-910 (ERRVIIEKKK…LRAKRAGLSE (305 aa)) are a coiled coil. Basic and acidic residues-rich tracts occupy residues 619–632 (TDAL…EETR) and 809–901 (KAAE…EARL). Disordered stretches follow at residues 619 to 649 (TDAL…QRLA) and 809 to 1035 (KAAE…QQNQ). Low complexity-rich tracts occupy residues 943–953 (KEAAGGAAPEA) and 988–1004 (PPSQ…QTPP).

This sequence belongs to the eIF-3 subunit A family. Component of the eukaryotic translation initiation factor 3 (eIF-3) complex.

The protein resides in the cytoplasm. Functionally, RNA-binding component of the eukaryotic translation initiation factor 3 (eIF-3) complex, which is involved in protein synthesis of a specialized repertoire of mRNAs and, together with other initiation factors, stimulates binding of mRNA and methionyl-tRNAi to the 40S ribosome. The eIF-3 complex specifically targets and initiates translation of a subset of mRNAs involved in cell proliferation. In Emericella nidulans (strain FGSC A4 / ATCC 38163 / CBS 112.46 / NRRL 194 / M139) (Aspergillus nidulans), this protein is Eukaryotic translation initiation factor 3 subunit A (tif32).